Consider the following 292-residue polypeptide: 5,10-methylenetetrahydrofolate reductase (292 aa).

The Proton donor/acceptor role is filled by glutamate 28. NADH is bound at residue threonine 59. FAD contacts are provided by tyrosine 60, alanine 62, histidine 88, arginine 118, glycine 119, aspartate 120, alanine 132, tyrosine 152, histidine 156, aspartate 165, asparagine 168, lysine 171, and lysine 172. Residue aspartate 120 participates in (6S)-5-methyl-5,6,7,8-tetrahydrofolate binding. Glutamine 183 is a binding site for NADH. Glutamine 183, glutamine 219, and lysine 279 together coordinate (6S)-5-methyl-5,6,7,8-tetrahydrofolate.

The protein belongs to the methylenetetrahydrofolate reductase family. The cofactor is FAD.

The enzyme catalyses (6S)-5-methyl-5,6,7,8-tetrahydrofolate + NAD(+) = (6R)-5,10-methylene-5,6,7,8-tetrahydrofolate + NADH + H(+). The protein operates within one-carbon metabolism; tetrahydrofolate interconversion. It functions in the pathway amino-acid biosynthesis; L-methionine biosynthesis via de novo pathway. Its function is as follows. Catalyzes the NADH-dependent reduction of 5,10-methylenetetrahydrofolate to 5-methyltetrahydrofolate. Is required to provide the methyl group necessary for methionine synthetase to convert homocysteine to methionine; the methyl group is given by 5-methyltetrahydrofolate. In Buchnera aphidicola subsp. Schizaphis graminum (strain Sg), this protein is 5,10-methylenetetrahydrofolate reductase (metF).